Consider the following 744-residue polypeptide: Merozoite surface protein 9 (744 aa).

Residues 1-23 form the signal peptide; the sequence is MMNMKIVLFSLLLFVIRWNIISC. The interaction with MSP1 and host SLC4A1/Band 3 stretch occupies residues 77–235; it reads KELLKEKQYT…VNDEDDVNDE (159 aa). Disordered regions lie at residues 202–282, 459–487, 512–540, and 666–744; these read KSQG…ATAY, DNQA…PTED, NNTP…ENFD, and VDAL…EESK. Polar residues predominate over residues 211-224; the sequence is SQNQNENNDNQKYQ. 8 repeat units span residues 226–231, 232–237, 238–243, 244–249, 250–255, 256–261, 262–267, and 268–273. Residues 226 to 273 form an 8 X 6 AA tandem repeats of [VT]-N-D-[ED]-[ED]-D region; the sequence is VNDEDDVNDEEDTNDDEDTNDEEDTNDDEDTNDDEDTNDEEDTNDEED. The segment covering 226-274 has biased composition (acidic residues); that stretch reads VNDEDDVNDEEDTNDDEDTNDEEDTNDDEDTNDDEDTNDEEDTNDEEDH. The segment at 364–528 is interaction with MSP1 and host SLC4A1/Band 3; the sequence is LKDNLINYEF…PPTQSKKKNK (165 aa). The segment covering 459–473 has biased composition (basic and acidic residues); it reads DNQAVDTKSMEEPKV. A compositionally biased stretch (low complexity) spans 512–521; that stretch reads NNTPNVVPPT. Positions 644-734 form a coiled coil; that stretch reads NQETEEEMEK…QEEEEEEEIV (91 aa). 2 stretches are compositionally biased toward basic and acidic residues: residues 672–698 and 706–719; these read KNKE…KEKE and EKEK…KEEK. The segment covering 720–734 has biased composition (acidic residues); sequence EKEEEQEEEEEEEIV.

This sequence belongs to the plasmodium ABRA family. Forms a complex composed of MSP1, MSP6, MSP7, MSP9 and MSP3; within the complex, MSP6 and MSP9 mediate the binding to the host erythrocyte. Interacts with MSP1 subunits p19 and p42; the interaction is direct. Interacts with host SLC4A1/Band 3 protein (via the 5ABC region). MSP1 subunits p19 or p42, and MSP9 form a co-ligand complex that interacts with host SLC4A1/Band 3 protein. In terms of processing, not glycosylated.

The protein localises to the cell membrane. It localises to the parasitophorous vacuole lumen. The protein resides in the secreted. In terms of biological role, during the asexual blood stage, involved in the sialic acid-independent (SAID) merozoite invasion of host erythrocytes by binding to host SLC4A1/Band 3 protein on the surface of the host erythrocyte. This Plasmodium falciparum (isolate 7G8) protein is Merozoite surface protein 9.